The sequence spans 215 residues: Riboflavin synthase (215 aa).

Lumazine-binding repeat units follow at residues 1–96 (MFTG…FGGH) and 97–193 (FVSG…YRFL). Residues 4-6 (GII), 47-49 (CLT), 61-66 (DVMPET), 100-102 (GHV), lysine 135, 144-146 (SLT), and 158-163 (SLIPHT) each bind 2,4-dihydroxypteridine.

As to quaternary structure, homotrimer. Can interact with 6,7-dimethyl-8-ribityllumazine synthase, forming a lumazine synthase/riboflavin synthase complex, also designated as 'heavy riboflavin synthase complex', which consists of a trimer of riboflavin synthase enclosed within an icosahedral structure composed of 60 subunits of 6,7-dimethyl-8-ribityllumazine synthase.

It catalyses the reaction 2 6,7-dimethyl-8-(1-D-ribityl)lumazine + H(+) = 5-amino-6-(D-ribitylamino)uracil + riboflavin. It participates in cofactor biosynthesis; riboflavin biosynthesis; riboflavin from 2-hydroxy-3-oxobutyl phosphate and 5-amino-6-(D-ribitylamino)uracil: step 2/2. With respect to regulation, is activated by sulfite ions. Functionally, catalyzes the dismutation of two molecules of 6,7-dimethyl-8-ribityllumazine, resulting in the formation of riboflavin and 5-amino-6-(D-ribitylamino)uracil. The sequence is that of Riboflavin synthase (ribE) from Bacillus subtilis (strain 168).